The sequence spans 223 residues: RNA-free ribonuclease P (223 aa).

This sequence belongs to the HARP family.

It catalyses the reaction Endonucleolytic cleavage of RNA, removing 5'-extranucleotides from tRNA precursor.. In terms of biological role, RNA-free RNase P that catalyzes the removal of the 5'-leader sequence from pre-tRNA to produce the mature 5'-terminus. This Methanococcus maripaludis (strain C7 / ATCC BAA-1331) protein is RNA-free ribonuclease P.